The chain runs to 1189 residues: Tyrosine-protein phosphatase non-receptor type 14 (1189 aa).

Positions 21–306 (FVTRIRLLDS…TRHKFYKQNK (286 aa)) constitute an FERM domain. A phosphoserine mark is found at serine 314, serine 461, serine 486, serine 591, serine 593, serine 594, and serine 646. The interval 744–775 (ARIPNRPPPEYPGPRKSVSNGALRQDQGTPLP) is disordered. Polar residues predominate over residues 760–771 (SVSNGALRQDQG). Serine 833 is subject to Phosphoserine. Positions 911–1182 (VFTEYEQIPN…KFVYQVLVQF (272 aa)) constitute a Tyrosine-protein phosphatase domain. Residue cysteine 1123 is the Phosphocysteine intermediate of the active site. Substrate is bound by residues 1123 to 1129 (CSAGVGR) and glutamine 1167.

It belongs to the protein-tyrosine phosphatase family. Non-receptor class subfamily. As to quaternary structure, interacts with FLT4; the interaction is enhanced by stimulation with VEGFC. Interacts (via PPxY motifs) with YAP1 (via WW domains); this interaction leads to the cytoplasmic sequestration of YAP1 and inhibits its transcriptional coactivator activity. Ubiquitinated by the ECS (Elongin BC-CUL2/5-SOCS-box protein)/LRR1 E3 ligase complex and subsequently targeted to proteasomal degradation. In terms of tissue distribution, thymus; in cells of both hematopoietic and non-hematopoietic origins.

It localises to the cytoplasm. The protein localises to the cytoskeleton. It is found in the nucleus. It catalyses the reaction O-phospho-L-tyrosyl-[protein] + H2O = L-tyrosyl-[protein] + phosphate. In terms of biological role, protein tyrosine phosphatase which may play a role in the regulation of lymphangiogenesis, cell-cell adhesion, cell-matrix adhesion, cell migration, cell growth and also regulates TGF-beta gene expression, thereby modulating epithelial-mesenchymal transition. Mediates beta-catenin dephosphorylation at adhesion junctions. Acts as a negative regulator of the oncogenic property of YAP, a downstream target of the hippo pathway, in a cell density-dependent manner. May function as a tumor suppressor. This is Tyrosine-protein phosphatase non-receptor type 14 (Ptpn14) from Mus musculus (Mouse).